The sequence spans 160 residues: S-ribosylhomocysteine lyase (160 aa).

Residues His57, His61, and Cys127 each coordinate Fe cation.

Belongs to the LuxS family. As to quaternary structure, homodimer. It depends on Fe cation as a cofactor.

The enzyme catalyses S-(5-deoxy-D-ribos-5-yl)-L-homocysteine = (S)-4,5-dihydroxypentane-2,3-dione + L-homocysteine. Functionally, involved in the synthesis of autoinducer 2 (AI-2) which is secreted by bacteria and is used to communicate both the cell density and the metabolic potential of the environment. The regulation of gene expression in response to changes in cell density is called quorum sensing. Catalyzes the transformation of S-ribosylhomocysteine (RHC) to homocysteine (HC) and 4,5-dihydroxy-2,3-pentadione (DPD). This is S-ribosylhomocysteine lyase from Streptococcus mutans serotype c (strain ATCC 700610 / UA159).